A 339-amino-acid chain; its full sequence is Phenylalanine--tRNA ligase alpha subunit (339 aa).

E254 lines the Mg(2+) pocket.

It belongs to the class-II aminoacyl-tRNA synthetase family. Phe-tRNA synthetase alpha subunit type 1 subfamily. Tetramer of two alpha and two beta subunits. Mg(2+) serves as cofactor.

Its subcellular location is the cytoplasm. It carries out the reaction tRNA(Phe) + L-phenylalanine + ATP = L-phenylalanyl-tRNA(Phe) + AMP + diphosphate + H(+). The protein is Phenylalanine--tRNA ligase alpha subunit of Clostridium perfringens (strain SM101 / Type A).